The primary structure comprises 475 residues: Putative poly(A) polymerase catalytic subunit (475 aa).

This sequence belongs to the poxviridae poly(A) polymerase catalytic subunit family. Highly divergent.

It localises to the virion. It catalyses the reaction RNA(n) + ATP = RNA(n)-3'-adenine ribonucleotide + diphosphate. In terms of biological role, polymerase that creates the 3'-poly(A) tail of mRNA's. The polypeptide is Putative poly(A) polymerase catalytic subunit (Ornithodoros (relapsing fever ticks)).